A 307-amino-acid chain; its full sequence is D-alanine--D-alanine ligase (307 aa).

One can recognise an ATP-grasp domain in the interval 110–299 (KQLWKGAGLP…FDVLVGEILL (190 aa)). Residue 136–185 (PVIVKPAHEGSSIGMAKADNTEELGEALVAAEKFDQDVLVEAWVNGPEYT) participates in ATP binding. Asp-253, Glu-266, and Asn-268 together coordinate Mg(2+).

The protein belongs to the D-alanine--D-alanine ligase family. Mg(2+) serves as cofactor. The cofactor is Mn(2+).

It localises to the cytoplasm. The enzyme catalyses 2 D-alanine + ATP = D-alanyl-D-alanine + ADP + phosphate + H(+). It participates in cell wall biogenesis; peptidoglycan biosynthesis. Its function is as follows. Cell wall formation. This Alcanivorax borkumensis (strain ATCC 700651 / DSM 11573 / NCIMB 13689 / SK2) protein is D-alanine--D-alanine ligase.